Here is a 510-residue protein sequence, read N- to C-terminus: NAD(P)H-quinone oxidoreductase subunit 2 B, chloroplastic (510 aa).

13 helical membrane-spanning segments follow: residues 24–44, 57–77, 99–119, 124–144, 149–169, 183–203, 227–247, 295–315, 323–343, 347–367, 395–415, 418–438, and 484–504; these read LLLF…GLIL, IPWL…ALLF, IFQF…VEYI, MAIT…MFLC, LITI…LSGY, YLLM…WLYG, PGIS…LSPA, WHLH…LIAI, MLAY…IVGD, GYAS…GTFA, ALSL…AGFF, LHLF…IGLL, and MIVC…IIAI.

Belongs to the complex I subunit 2 family. NDH is composed of at least 16 different subunits, 5 of which are encoded in the nucleus.

The protein resides in the plastid. Its subcellular location is the chloroplast thylakoid membrane. The enzyme catalyses a plastoquinone + NADH + (n+1) H(+)(in) = a plastoquinol + NAD(+) + n H(+)(out). It catalyses the reaction a plastoquinone + NADPH + (n+1) H(+)(in) = a plastoquinol + NADP(+) + n H(+)(out). NDH shuttles electrons from NAD(P)H:plastoquinone, via FMN and iron-sulfur (Fe-S) centers, to quinones in the photosynthetic chain and possibly in a chloroplast respiratory chain. The immediate electron acceptor for the enzyme in this species is believed to be plastoquinone. Couples the redox reaction to proton translocation, and thus conserves the redox energy in a proton gradient. The chain is NAD(P)H-quinone oxidoreductase subunit 2 B, chloroplastic from Buxus microphylla (Littleleaf boxwood).